Reading from the N-terminus, the 568-residue chain is Protein adenylyltransferase SelO, mitochondrial (568 aa).

Residues Gly-120, Gly-122, Arg-123, Lys-144, Asp-156, Gly-157, Arg-208, and Arg-215 each contribute to the ATP site. Catalysis depends on Asp-287, which acts as the Proton acceptor. Mg(2+)-binding residues include Asn-288 and Asp-297. Asp-297 is a binding site for ATP.

This sequence belongs to the SELO family. Requires Mg(2+) as cofactor. In terms of processing, forms probably one or more intrachain disulfide bridges.

It localises to the mitochondrion. It catalyses the reaction L-tyrosyl-[protein] + ATP = O-(5'-adenylyl)-L-tyrosyl-[protein] + diphosphate. Functionally, catalyzes the transfer of adenosine 5'-monophosphate (AMP) to Tyr residues of target mitochondrial proteins (AMPylation). Involved in redox homeostasis by regulating the cellular response to oxidative stress. Regulates protein S-glutathionylation levels possibly by AMPylation of deglutathionylation enzymes such as glutaredoxins. This chain is Protein adenylyltransferase SelO, mitochondrial, found in Schizosaccharomyces pombe (strain 972 / ATCC 24843) (Fission yeast).